The primary structure comprises 83 residues: U1-theraphotoxin-Hs1f (83 aa).

The N-terminal stretch at 1 to 21 (MKVTLIAILTCAAVLVLHTTA) is a signal peptide. Positions 22-48 (AEELEESQLMEVGMPDTELAAVDEERL) are excised as a propeptide. Cystine bridges form between Cys51–Cys64, Cys55–Cys75, and Cys69–Cys80.

This sequence belongs to the neurotoxin 12 (Hwtx-2) family. 02 (Hwtx-2) subfamily. In terms of tissue distribution, expressed by the venom gland.

It localises to the secreted. In terms of biological role, lethal neurotoxin that blocks neuromuscular transmission. The sequence is that of U1-theraphotoxin-Hs1f from Cyriopagopus schmidti (Chinese bird spider).